We begin with the raw amino-acid sequence, 529 residues long: Peptide chain release factor 3 (529 aa).

A tr-type G domain is found at 11–280 (SKRRTFAIIS…GLTEWAPAPK (270 aa)). GTP is bound by residues 20–27 (SHPDAGKT), 88–92 (DTPGH), and 142–145 (NKLD).

Belongs to the TRAFAC class translation factor GTPase superfamily. Classic translation factor GTPase family. PrfC subfamily.

The protein resides in the cytoplasm. In terms of biological role, increases the formation of ribosomal termination complexes and stimulates activities of RF-1 and RF-2. It binds guanine nucleotides and has strong preference for UGA stop codons. It may interact directly with the ribosome. The stimulation of RF-1 and RF-2 is significantly reduced by GTP and GDP, but not by GMP. This chain is Peptide chain release factor 3, found in Vibrio campbellii (strain ATCC BAA-1116).